The primary structure comprises 284 residues: D-tagatose-1,6-bisphosphate aldolase subunit GatY (284 aa).

The Proton donor role is filled by aspartate 82. Residues histidine 83 and histidine 180 each contribute to the Zn(2+) site. A dihydroxyacetone phosphate-binding site is contributed by glycine 181. A Zn(2+)-binding site is contributed by histidine 208. Residues 209-211 (GAS) and 230-233 (NVAT) each bind dihydroxyacetone phosphate.

Belongs to the class II fructose-bisphosphate aldolase family. TagBP aldolase GatY subfamily. In terms of assembly, forms a complex with GatZ. It depends on Zn(2+) as a cofactor.

It catalyses the reaction D-tagatofuranose 1,6-bisphosphate = D-glyceraldehyde 3-phosphate + dihydroxyacetone phosphate. Its pathway is carbohydrate metabolism; D-tagatose 6-phosphate degradation; D-glyceraldehyde 3-phosphate and glycerone phosphate from D-tagatose 6-phosphate: step 2/2. Catalytic subunit of the tagatose-1,6-bisphosphate aldolase GatYZ, which catalyzes the reversible aldol condensation of dihydroxyacetone phosphate (DHAP or glycerone-phosphate) with glyceraldehyde 3-phosphate (G3P) to produce tagatose 1,6-bisphosphate (TBP). Requires GatZ subunit for full activity and stability. Is involved in the catabolism of galactitol. The chain is D-tagatose-1,6-bisphosphate aldolase subunit GatY from Escherichia coli O45:K1 (strain S88 / ExPEC).